A 455-amino-acid polypeptide reads, in one-letter code: Probable glycine dehydrogenase (decarboxylating) subunit 1 (455 aa).

It belongs to the GcvP family. N-terminal subunit subfamily. The glycine cleavage system is composed of four proteins: P, T, L and H. In this organism, the P 'protein' is a heterodimer of two subunits.

The catalysed reaction is N(6)-[(R)-lipoyl]-L-lysyl-[glycine-cleavage complex H protein] + glycine + H(+) = N(6)-[(R)-S(8)-aminomethyldihydrolipoyl]-L-lysyl-[glycine-cleavage complex H protein] + CO2. Its function is as follows. The glycine cleavage system catalyzes the degradation of glycine. The P protein binds the alpha-amino group of glycine through its pyridoxal phosphate cofactor; CO(2) is released and the remaining methylamine moiety is then transferred to the lipoamide cofactor of the H protein. This is Probable glycine dehydrogenase (decarboxylating) subunit 1 from Francisella tularensis subsp. tularensis (strain FSC 198).